Reading from the N-terminus, the 200-residue chain is Dephospho-CoA kinase (200 aa).

A DPCK domain is found at 3-200 (IFGLTGGIGS…LNVNNKCNMD (198 aa)). Residue 11 to 16 (GSGKSL) participates in ATP binding.

This sequence belongs to the CoaE family.

It localises to the cytoplasm. The catalysed reaction is 3'-dephospho-CoA + ATP = ADP + CoA + H(+). The protein operates within cofactor biosynthesis; coenzyme A biosynthesis; CoA from (R)-pantothenate: step 5/5. Functionally, catalyzes the phosphorylation of the 3'-hydroxyl group of dephosphocoenzyme A to form coenzyme A. The protein is Dephospho-CoA kinase of Ehrlichia canis (strain Jake).